Consider the following 542-residue polypeptide: Calcium-dependent protein kinase 7 (542 aa).

Gly2 is lipidated: N-myristoyl glycine. Positions 79–337 (YIIGRKLGQG…AHEVLRHPWI (259 aa)) constitute a Protein kinase domain. ATP is bound by residues 85 to 93 (LGQGQFGTT) and Lys108. The active-site Proton acceptor is Asp203. The autoinhibitory domain stretch occupies residues 343–373 (ATDQALDPSVISRLKQFSAMNKLKKLALRVI). The 36-residue stretch at 380–415 (EEIAGLREMFKAVDTKNRGVITFGELREGLRRFGAE) folds into the EF-hand 1 domain. Residues Asp393, Glu404, Asp431, Asn433, Thr435, Glu440, Asp465, Asp467, Ser469, Tyr471, Lys476, Asp499, Asn501, Asp503, Gln505, and Glu510 each contribute to the Ca(2+) site. Positions 416 to 451 (FKDTEIGDIMEAAHNDNNVTIHYEEFIAATLPLNKI) constitute an EF-hand 2; degenerate domain. EF-hand domains are found at residues 452 to 487 (EREE…HNME) and 488 to 521 (DSLL…SNVG).

The protein belongs to the protein kinase superfamily. Ser/Thr protein kinase family. CDPK subfamily. In terms of tissue distribution, expressed in roots. Expressed in leaf sheaths.

It localises to the membrane. The protein resides in the cytoplasm. The protein localises to the cytosol. The catalysed reaction is L-seryl-[protein] + ATP = O-phospho-L-seryl-[protein] + ADP + H(+). It carries out the reaction L-threonyl-[protein] + ATP = O-phospho-L-threonyl-[protein] + ADP + H(+). Its activity is regulated as follows. Activated by calcium. Autophosphorylation may play an important role in the regulation of the kinase activity. Its function is as follows. May play a role in signal transduction pathways that involve calcium as a second messenger. May be a signaling component in the response to gibberellin and cold stress. The chain is Calcium-dependent protein kinase 7 from Oryza sativa subsp. japonica (Rice).